Consider the following 351-residue polypeptide: Tropomodulin-2 (351 aa).

Phosphoserine is present on Ser25.

Belongs to the tropomodulin family. As to quaternary structure, binds to the N-terminus of tropomyosin and to actin. In terms of tissue distribution, neuronal-tissue specific.

The protein resides in the cytoplasm. The protein localises to the cytoskeleton. In terms of biological role, blocks the elongation and depolymerization of the actin filaments at the pointed end. The Tmod/TM complex contributes to the formation of the short actin protofilament, which in turn defines the geometry of the membrane skeleton. The protein is Tropomodulin-2 (TMOD2) of Homo sapiens (Human).